A 623-amino-acid polypeptide reads, in one-letter code: Fanconi anemia group G protein homolog (623 aa).

TPR repeat units lie at residues 251–284 (VQVY…GTTC), 349–382 (SQAK…LLGG), 458–491 (SATH…LFRT), and 517–550 (VAAL…CPGN).

In terms of assembly, belongs to the multisubunit FA complex composed of FANCA, FANCB, FANCC, FANCE, FANCF, FANCG, FANCL/PHF9 and FANCM. In complex with FANCF, FANCA and FANCL, but not with FANCC, nor FANCE, interacts with HES1; this interaction may be essential for the stability and nuclear localization of FA core complex proteins. The complex with FANCC and FANCG may also include EIF2AK2 and HSP70. In terms of tissue distribution, highest expression levels in spleen, thymus and testis.

Its subcellular location is the nucleus. Functionally, DNA repair protein that may operate in a postreplication repair or a cell cycle checkpoint function. May be implicated in interstrand DNA cross-link repair and in the maintenance of normal chromosome stability. Candidate tumor suppressor gene. The sequence is that of Fanconi anemia group G protein homolog (Fancg) from Mus musculus (Mouse).